Reading from the N-terminus, the 835-residue chain is Bifunctional uridylyltransferase/uridylyl-removing enzyme (835 aa).

The segment at 1–316 (MTDEAEDSGP…GGKPVAERSP (316 aa)) is uridylyltransferase. Residues 317 to 650 (LAEGVVEQDG…SADGPEPLGV (334 aa)) form a uridylyl-removing region. One can recognise an HD domain in the interval 431 to 554 (VDRHLIETAV…DALATGPAAW (124 aa)). Residues 610–645 (QTEPPADSAPAPSSPSSPSFPSPLSSPSSPSSADGP) form a disordered region. Over residues 621–630 (PSSPSSPSFP) the composition is skewed to pro residues. Residues 631–642 (SPLSSPSSPSSA) are compositionally biased toward low complexity. 2 ACT domains span residues 651–736 (ELLI…LAER) and 765–835 (VIEV…SLRT).

It belongs to the GlnD family. Mg(2+) is required as a cofactor.

It carries out the reaction [protein-PII]-L-tyrosine + UTP = [protein-PII]-uridylyl-L-tyrosine + diphosphate. The enzyme catalyses [protein-PII]-uridylyl-L-tyrosine + H2O = [protein-PII]-L-tyrosine + UMP + H(+). Uridylyltransferase (UTase) activity is inhibited by glutamine, while glutamine activates uridylyl-removing (UR) activity. Its function is as follows. Modifies, by uridylylation and deuridylylation, the PII regulatory proteins (GlnB and homologs), in response to the nitrogen status of the cell that GlnD senses through the glutamine level. Under low glutamine levels, catalyzes the conversion of the PII proteins and UTP to PII-UMP and PPi, while under higher glutamine levels, GlnD hydrolyzes PII-UMP to PII and UMP (deuridylylation). Thus, controls uridylylation state and activity of the PII proteins, and plays an important role in the regulation of nitrogen assimilation and metabolism. The sequence is that of Bifunctional uridylyltransferase/uridylyl-removing enzyme from Streptomyces coelicolor (strain ATCC BAA-471 / A3(2) / M145).